The sequence spans 713 residues: Catalase-peroxidase (713 aa).

The tryptophyl-tyrosyl-methioninium (Trp-Tyr) (with M-226) cross-link spans 77 to 200; the sequence is WHSAGTYRTT…LGATVMGLIY (124 aa). His-78 acts as the Proton acceptor in catalysis. The segment at residues 200 to 226 is a cross-link (tryptophyl-tyrosyl-methioninium (Tyr-Met) (with W-77)); that stretch reads YVNPEGPDGEPDLEGSAANIRESFGRM. His-241 is a binding site for heme b.

The protein belongs to the peroxidase family. Peroxidase/catalase subfamily. As to quaternary structure, homodimer or homotetramer. Heme b is required as a cofactor. In terms of processing, formation of the three residue Trp-Tyr-Met cross-link is important for the catalase, but not the peroxidase activity of the enzyme.

The catalysed reaction is H2O2 + AH2 = A + 2 H2O. It catalyses the reaction 2 H2O2 = O2 + 2 H2O. Functionally, bifunctional enzyme with both catalase and broad-spectrum peroxidase activity. The chain is Catalase-peroxidase from Natronomonas pharaonis (strain ATCC 35678 / DSM 2160 / CIP 103997 / JCM 8858 / NBRC 14720 / NCIMB 2260 / Gabara) (Halobacterium pharaonis).